The following is a 238-amino-acid chain: Purine nucleoside phosphorylase DeoD-type (238 aa).

His4 contacts a purine D-ribonucleoside. Residues Gly20, Arg24, Arg43, and 87-90 each bind phosphate; that span reads RVGS. Residues 179–181 and 203–204 each bind a purine D-ribonucleoside; these read EME and SD. The active-site Proton donor is the Asp204.

The protein belongs to the PNP/UDP phosphorylase family. As to quaternary structure, homohexamer; trimer of homodimers.

It carries out the reaction a purine D-ribonucleoside + phosphate = a purine nucleobase + alpha-D-ribose 1-phosphate. The enzyme catalyses a purine 2'-deoxy-D-ribonucleoside + phosphate = a purine nucleobase + 2-deoxy-alpha-D-ribose 1-phosphate. Functionally, catalyzes the reversible phosphorolytic breakdown of the N-glycosidic bond in the beta-(deoxy)ribonucleoside molecules, with the formation of the corresponding free purine bases and pentose-1-phosphate. The chain is Purine nucleoside phosphorylase DeoD-type from Histophilus somni (strain 129Pt) (Haemophilus somnus).